Reading from the N-terminus, the 506-residue chain is Ribose import ATP-binding protein RbsA 2 (506 aa).

ABC transporter domains are found at residues 6–241 and 254–499; these read LSMT…VGRV and EKSN…SITI. 38–45 contributes to the ATP binding site; the sequence is GENGAGKS.

This sequence belongs to the ABC transporter superfamily. Ribose importer (TC 3.A.1.2.1) family. The complex is composed of an ATP-binding protein (RbsA), two transmembrane proteins (RbsC) and a solute-binding protein (RbsB).

It is found in the cell inner membrane. It catalyses the reaction D-ribose(out) + ATP + H2O = D-ribose(in) + ADP + phosphate + H(+). Its function is as follows. Part of the ABC transporter complex RbsABC involved in ribose import. Responsible for energy coupling to the transport system. This chain is Ribose import ATP-binding protein RbsA 2, found in Agrobacterium fabrum (strain C58 / ATCC 33970) (Agrobacterium tumefaciens (strain C58)).